A 155-amino-acid chain; its full sequence is SsrA-binding protein (155 aa).

The protein belongs to the SmpB family.

It is found in the cytoplasm. Its function is as follows. Required for rescue of stalled ribosomes mediated by trans-translation. Binds to transfer-messenger RNA (tmRNA), required for stable association of tmRNA with ribosomes. tmRNA and SmpB together mimic tRNA shape, replacing the anticodon stem-loop with SmpB. tmRNA is encoded by the ssrA gene; the 2 termini fold to resemble tRNA(Ala) and it encodes a 'tag peptide', a short internal open reading frame. During trans-translation Ala-aminoacylated tmRNA acts like a tRNA, entering the A-site of stalled ribosomes, displacing the stalled mRNA. The ribosome then switches to translate the ORF on the tmRNA; the nascent peptide is terminated with the 'tag peptide' encoded by the tmRNA and targeted for degradation. The ribosome is freed to recommence translation, which seems to be the essential function of trans-translation. This Streptococcus pneumoniae (strain Hungary19A-6) protein is SsrA-binding protein.